The sequence spans 204 residues: Ribonuclease HII (204 aa).

In terms of domain architecture, RNase H type-2 spans 13 to 204; the sequence is GPVAGCDEAG…VRRAARLHSS (192 aa). 3 residues coordinate a divalent metal cation: Asp-19, Glu-20, and Asp-113.

Belongs to the RNase HII family. It depends on Mn(2+) as a cofactor. Mg(2+) is required as a cofactor.

Its subcellular location is the cytoplasm. It carries out the reaction Endonucleolytic cleavage to 5'-phosphomonoester.. Functionally, endonuclease that specifically degrades the RNA of RNA-DNA hybrids. In Cutibacterium acnes (strain DSM 16379 / KPA171202) (Propionibacterium acnes), this protein is Ribonuclease HII.